Consider the following 437-residue polypeptide: Phosphomethylpyrimidine synthase (437 aa).

Substrate contacts are provided by residues Asn69, Met98, Tyr127, His163, 185–187 (SRG), 226–229 (DACR), and Glu265. His269 is a Zn(2+) binding site. Tyr292 contacts substrate. His333 serves as a coordination point for Zn(2+). [4Fe-4S] cluster contacts are provided by Cys409, Cys412, and Cys416.

It belongs to the ThiC family. The cofactor is [4Fe-4S] cluster.

The catalysed reaction is 5-amino-1-(5-phospho-beta-D-ribosyl)imidazole + S-adenosyl-L-methionine = 4-amino-2-methyl-5-(phosphooxymethyl)pyrimidine + CO + 5'-deoxyadenosine + formate + L-methionine + 3 H(+). The protein operates within cofactor biosynthesis; thiamine diphosphate biosynthesis. Its function is as follows. Catalyzes the synthesis of the hydroxymethylpyrimidine phosphate (HMP-P) moiety of thiamine from aminoimidazole ribotide (AIR) in a radical S-adenosyl-L-methionine (SAM)-dependent reaction. This is Phosphomethylpyrimidine synthase from Clostridium kluyveri (strain NBRC 12016).